Reading from the N-terminus, the 358-residue chain is Peroxisome biogenesis protein 3-1 (358 aa).

The helical transmembrane segment at 15-32 (ILVTTTCLGSGYLLYKLY) threads the bilayer. Residues 33-62 (NAHTRKLADLERELANERENDEIIKTQMKA) adopt a coiled-coil conformation.

Belongs to the peroxin-3 family.

It localises to the peroxisome membrane. Involved in morphology determination of peroxisomes, but not in import of peroxisomal matrix proteins. May act as a docking factor for PEX19 and be necessary for the import of peroxisomal membrane proteins in the peroxisomes. In Arabidopsis thaliana (Mouse-ear cress), this protein is Peroxisome biogenesis protein 3-1 (PEX3-1).